The primary structure comprises 568 residues: UPF0313 protein FN0734 (568 aa).

In terms of domain architecture, Radical SAM core spans 289-562; it reads ALDTIKYSVT…KQKQKDIVTE (274 aa). [4Fe-4S] cluster is bound by residues C303, C307, and C310. A disordered region spans residues 546–568; that stretch reads VEKDNGKKQKQKDIVTEKRKNRK.

Belongs to the UPF0313 family. [4Fe-4S] cluster serves as cofactor.

The polypeptide is UPF0313 protein FN0734 (Fusobacterium nucleatum subsp. nucleatum (strain ATCC 25586 / DSM 15643 / BCRC 10681 / CIP 101130 / JCM 8532 / KCTC 2640 / LMG 13131 / VPI 4355)).